We begin with the raw amino-acid sequence, 125 residues long: UPF0102 protein ABO_0585 (125 aa).

The protein belongs to the UPF0102 family.

In Alcanivorax borkumensis (strain ATCC 700651 / DSM 11573 / NCIMB 13689 / SK2), this protein is UPF0102 protein ABO_0585.